The sequence spans 478 residues: Kynureninase (478 aa).

Pyridoxal 5'-phosphate-binding positions include Leu-150, Thr-151, 178-181 (FPSD), Ser-234, Asp-263, His-266, and Tyr-288. Lys-289 is modified (N6-(pyridoxal phosphate)lysine). Pyridoxal 5'-phosphate contacts are provided by Trp-318 and Asn-346.

It belongs to the kynureninase family. Homodimer. It depends on pyridoxal 5'-phosphate as a cofactor.

The protein resides in the cytoplasm. It catalyses the reaction L-kynurenine + H2O = anthranilate + L-alanine + H(+). The enzyme catalyses 3-hydroxy-L-kynurenine + H2O = 3-hydroxyanthranilate + L-alanine + H(+). The protein operates within amino-acid degradation; L-kynurenine degradation; L-alanine and anthranilate from L-kynurenine: step 1/1. It participates in cofactor biosynthesis; NAD(+) biosynthesis; quinolinate from L-kynurenine: step 2/3. Catalyzes the cleavage of L-kynurenine (L-Kyn) and L-3-hydroxykynurenine (L-3OHKyn) into anthranilic acid (AA) and 3-hydroxyanthranilic acid (3-OHAA), respectively. This chain is Kynureninase, found in Caenorhabditis elegans.